The chain runs to 271 residues: 4-hydroxy-tetrahydrodipicolinate reductase (271 aa).

Residues 11–16 (GGSGRM) and E37 contribute to the NAD(+) site. R38 is an NADP(+) binding site. NAD(+) is bound by residues 101-103 (GTT) and 125-128 (APNM). The active-site Proton donor/acceptor is the H158. H159 contributes to the (S)-2,3,4,5-tetrahydrodipicolinate binding site. K162 acts as the Proton donor in catalysis. Residue 168-169 (GT) participates in (S)-2,3,4,5-tetrahydrodipicolinate binding.

It belongs to the DapB family.

The protein resides in the cytoplasm. The catalysed reaction is (S)-2,3,4,5-tetrahydrodipicolinate + NAD(+) + H2O = (2S,4S)-4-hydroxy-2,3,4,5-tetrahydrodipicolinate + NADH + H(+). The enzyme catalyses (S)-2,3,4,5-tetrahydrodipicolinate + NADP(+) + H2O = (2S,4S)-4-hydroxy-2,3,4,5-tetrahydrodipicolinate + NADPH + H(+). It functions in the pathway amino-acid biosynthesis; L-lysine biosynthesis via DAP pathway; (S)-tetrahydrodipicolinate from L-aspartate: step 4/4. Functionally, catalyzes the conversion of 4-hydroxy-tetrahydrodipicolinate (HTPA) to tetrahydrodipicolinate. The protein is 4-hydroxy-tetrahydrodipicolinate reductase of Shewanella loihica (strain ATCC BAA-1088 / PV-4).